Reading from the N-terminus, the 347-residue chain is Phosphoribosylformylglycinamidine cyclo-ligase (347 aa).

This sequence belongs to the AIR synthase family.

The protein localises to the cytoplasm. The catalysed reaction is 2-formamido-N(1)-(5-O-phospho-beta-D-ribosyl)acetamidine + ATP = 5-amino-1-(5-phospho-beta-D-ribosyl)imidazole + ADP + phosphate + H(+). Its pathway is purine metabolism; IMP biosynthesis via de novo pathway; 5-amino-1-(5-phospho-D-ribosyl)imidazole from N(2)-formyl-N(1)-(5-phospho-D-ribosyl)glycinamide: step 2/2. The protein is Phosphoribosylformylglycinamidine cyclo-ligase of Alkaliphilus metalliredigens (strain QYMF).